The primary structure comprises 40 residues: Photosystem II reaction center protein J (40 aa).

A helical membrane pass occupies residues 8–28; it reads IPLWVIGTVAGIPVIGLIGIF.

Belongs to the PsbJ family. PSII is composed of 1 copy each of membrane proteins PsbA, PsbB, PsbC, PsbD, PsbE, PsbF, PsbH, PsbI, PsbJ, PsbK, PsbL, PsbM, PsbT, PsbX, PsbY, PsbZ, Psb30/Ycf12, at least 3 peripheral proteins of the oxygen-evolving complex and a large number of cofactors. It forms dimeric complexes.

Its subcellular location is the plastid. It localises to the chloroplast thylakoid membrane. Its function is as follows. One of the components of the core complex of photosystem II (PSII). PSII is a light-driven water:plastoquinone oxidoreductase that uses light energy to abstract electrons from H(2)O, generating O(2) and a proton gradient subsequently used for ATP formation. It consists of a core antenna complex that captures photons, and an electron transfer chain that converts photonic excitation into a charge separation. This is Photosystem II reaction center protein J from Nasturtium officinale (Watercress).